The primary structure comprises 251 residues: Sugar fermentation stimulation protein homolog (251 aa).

Belongs to the SfsA family.

This is Sugar fermentation stimulation protein homolog from Prochlorococcus marinus (strain MIT 9313).